The sequence spans 272 residues: Octanoyltransferase (272 aa).

Over residues 1–12 (MQQDPPTSQPHT) the composition is skewed to polar residues. The tract at residues 1 to 20 (MQQDPPTSQPHTPQIVDGVK) is disordered. The BPL/LPL catalytic domain occupies 65–255 (HQRPNTVIYV…EMMSFQPYEM (191 aa)). Substrate is bound by residues 103–110 (RGGEITWH), 175–177 (AIG), and 188–190 (GFA). The Acyl-thioester intermediate role is filled by cysteine 206.

The protein belongs to the LipB family.

It localises to the cytoplasm. It catalyses the reaction octanoyl-[ACP] + L-lysyl-[protein] = N(6)-octanoyl-L-lysyl-[protein] + holo-[ACP] + H(+). The protein operates within protein modification; protein lipoylation via endogenous pathway; protein N(6)-(lipoyl)lysine from octanoyl-[acyl-carrier-protein]: step 1/2. Its function is as follows. Catalyzes the transfer of endogenously produced octanoic acid from octanoyl-acyl-carrier-protein onto the lipoyl domains of lipoate-dependent enzymes. Lipoyl-ACP can also act as a substrate although octanoyl-ACP is likely to be the physiological substrate. This chain is Octanoyltransferase, found in Cutibacterium acnes (strain DSM 16379 / KPA171202) (Propionibacterium acnes).